The sequence spans 562 residues: Tetratricopeptide repeat protein 34 (562 aa).

The disordered stretch occupies residues 1 to 30; the sequence is MLHKKPQRANENGISQRKKPSDQDNSSVKE. Positions 19–30 are enriched in basic and acidic residues; the sequence is KPSDQDNSSVKE. TPR repeat units lie at residues 51 to 84, 175 to 208, 210 to 242, 304 to 337, 388 to 421, 423 to 455, 461 to 494, and 509 to 542; these read DVSR…SSQR, KDSL…EPYN, EALS…DASY, AHFH…NAID, FQAA…SNNN, KYLR…HSSH, AEDY…EHAS, and AGIF…DENN.

This Xenopus laevis (African clawed frog) protein is Tetratricopeptide repeat protein 34 (ttc34).